Consider the following 489-residue polypeptide: Retinoblastoma-binding protein 5 homolog (489 aa).

6 WD repeats span residues 22 to 63 (DCIS…KIIS), 64 to 103 (AHVH…LEHK), 147 to 187 (DSDG…VVAS), 195 to 234 (SSAT…TLGK), 248 to 290 (VNKT…KILH), and 292 to 330 (TKGE…NWSA). Residues 451-489 (DVSLPDAPTDETHPLISSKASKDKQQPVGGKKAAGRTKK) form a disordered region.

As to quaternary structure, core component of several methyltransferase-containing complexes. Component of the SET1 complex, composed at least of the catalytic subunit Set1, wds/WDR5, Wdr82, Rbbp5, ash2, Cfp1/CXXC1, hcf and Dpy-30L1. Component of the MLL3/4 complex composed at least of the catalytic subunit trr, ash2, Rbbp5, Dpy-30L1, wds, hcf, ptip, Pa1, Utx, Lpt and Ncoa6.

The protein resides in the nucleus. Its function is as follows. Component of the SET1 complex that specifically di- and trimethylates 'Lys-4' of histone H3 and of the MLL3/4 complex which also methylates histone H3 'Lys-4'. The protein is Retinoblastoma-binding protein 5 homolog of Drosophila melanogaster (Fruit fly).